The primary structure comprises 571 residues: Proline--tRNA ligase (571 aa).

This sequence belongs to the class-II aminoacyl-tRNA synthetase family. ProS type 1 subfamily. In terms of assembly, homodimer.

The protein resides in the cytoplasm. It catalyses the reaction tRNA(Pro) + L-proline + ATP = L-prolyl-tRNA(Pro) + AMP + diphosphate. Catalyzes the attachment of proline to tRNA(Pro) in a two-step reaction: proline is first activated by ATP to form Pro-AMP and then transferred to the acceptor end of tRNA(Pro). As ProRS can inadvertently accommodate and process non-cognate amino acids such as alanine and cysteine, to avoid such errors it has two additional distinct editing activities against alanine. One activity is designated as 'pretransfer' editing and involves the tRNA(Pro)-independent hydrolysis of activated Ala-AMP. The other activity is designated 'posttransfer' editing and involves deacylation of mischarged Ala-tRNA(Pro). The misacylated Cys-tRNA(Pro) is not edited by ProRS. The protein is Proline--tRNA ligase of Pseudomonas putida (strain ATCC 700007 / DSM 6899 / JCM 31910 / BCRC 17059 / LMG 24140 / F1).